A 266-amino-acid polypeptide reads, in one-letter code: Glutamate racemase (266 aa).

Substrate contacts are provided by residues 9–10 (DS) and 41–42 (YG). Cysteine 72 acts as the Proton donor/acceptor in catalysis. 73 to 74 (NT) lines the substrate pocket. Cysteine 183 (proton donor/acceptor) is an active-site residue. Position 184–185 (184–185 (TH)) interacts with substrate.

It belongs to the aspartate/glutamate racemases family.

The catalysed reaction is L-glutamate = D-glutamate. It participates in cell wall biogenesis; peptidoglycan biosynthesis. In terms of biological role, provides the (R)-glutamate required for cell wall biosynthesis. This chain is Glutamate racemase, found in Listeria innocua serovar 6a (strain ATCC BAA-680 / CLIP 11262).